A 246-amino-acid polypeptide reads, in one-letter code: uncharacterized protein (246 aa).

Disordered regions lie at residues 9–125 and 155–203; these read CSRV…GAMA and QPVR…EEKA. Residues 27–37 show a composition bias toward basic residues; that stretch reads GTRRQRQRPRQ. Pro residues-rich tracts occupy residues 54–64 and 101–117; these read PRPPTGPPARY and EPRP…PPGS. A compositionally biased stretch (basic residues) spans 161–176; sequence KLPKGKGRLRRPRQSR. Threonine 179 carries the post-translational modification Phosphothreonine. 3 positions are modified to phosphoserine: serine 196, serine 210, and serine 220.

The protein resides in the cytoplasm. This is an uncharacterized protein from Mus musculus (Mouse).